We begin with the raw amino-acid sequence, 607 residues long: Kelch repeat and BTB domain-containing protein 3 (607 aa).

The 68-residue stretch at 48–115 (YDFKIIMKEE…AYTGKTRITD (68 aa)) folds into the BTB domain. One can recognise a BACK domain in the interval 150–250 (CLHLLSLSDS…QLSEDTLQDY (101 aa)). Kelch repeat units follow at residues 291–337 (KYIF…SSYG), 339–390 (KIFL…TPRT), 400–450 (RLFV…ACQN), 452–502 (IYVL…KAVP), and 548–595 (KIYI…VIQF).

This is Kelch repeat and BTB domain-containing protein 3 from Mus musculus (Mouse).